We begin with the raw amino-acid sequence, 489 residues long: Monocarboxylate transporter 2 (489 aa).

Residues Met-1 to Asp-21 lie on the Cytoplasmic side of the membrane. The helical transmembrane segment at Gly-22–Phe-42 threads the bilayer. The Extracellular portion of the chain corresponds to Pro-43–Ala-65. The helical transmembrane segment at Trp-66–Val-86 threads the bilayer. At Asn-87–Val-95 the chain is on the cytoplasmic side. The helical transmembrane segment at Ile-96–Ile-116 threads the bilayer. The Extracellular segment spans residues Glu-117 to Thr-121. The chain crosses the membrane as a helical span at residues Val-122–Gly-142. The Cytoplasmic segment spans residues Lys-143–Gly-154. A helical membrane pass occupies residues Phe-155 to Phe-175. Topologically, residues Asn-176 to Gly-179 are extracellular. A helical membrane pass occupies residues Trp-180 to Leu-200. Over Met-201–Gly-250 the chain is Cytoplasmic. Positions Pro-206–Arg-227 are disordered. The chain crosses the membrane as a helical span at residues Phe-251–Phe-271. Residues Leu-272–Ser-286 are Extracellular-facing. Residues Ala-287–Ile-307 form a helical membrane-spanning segment. Topologically, residues Ala-308 to Arg-316 are cytoplasmic. A helical membrane pass occupies residues Ile-317–Leu-337. The Extracellular segment spans residues Ala-338 to Thr-342. Residues Ala-343 to Phe-363 traverse the membrane as a helical segment. The Cytoplasmic portion of the chain corresponds to Glu-364–Ser-377. Residues Ala-378–Gly-398 traverse the membrane as a helical segment. Residues Lys-399–Leu-410 are Extracellular-facing. The chain crosses the membrane as a helical span at residues Tyr-411–Ile-431. At Asn-432 to Ile-489 the chain is on the cytoplasmic side. Residues Lys-441–Ile-489 form a disordered region. Basic and acidic residues-rich tracts occupy residues Lys-456–Thr-470 and Pro-480–Ile-489.

This sequence belongs to the major facilitator superfamily. Monocarboxylate porter (TC 2.A.1.13) family. In terms of assembly, homodimer. Interacts with GRID2IP. Interacts with EMB; interaction mediates SLC16A7 targeting to the plasma membrane. Interacts with isoform 2 of BSG. Detected in brain and kidney (at protein level).

The protein localises to the cell membrane. The protein resides in the basolateral cell membrane. It is found in the cytoplasm. The enzyme catalyses 3-methyl-2-oxobutanoate(out) + H(+)(out) = 3-methyl-2-oxobutanoate(in) + H(+)(in). It carries out the reaction (S)-lactate(in) + H(+)(in) = (S)-lactate(out) + H(+)(out). It catalyses the reaction acetoacetate(out) + H(+)(out) = acetoacetate(in) + H(+)(in). The catalysed reaction is (R)-3-hydroxybutanoate(out) + H(+)(out) = (R)-3-hydroxybutanoate(in) + H(+)(in). The enzyme catalyses 4-methyl-2-oxopentanoate(out) + H(+)(out) = 4-methyl-2-oxopentanoate(in) + H(+)(in). It carries out the reaction pyruvate(out) + H(+)(out) = pyruvate(in) + H(+)(in). It catalyses the reaction (S)-3-hydroxybutanoate(out) + H(+)(out) = (S)-3-hydroxybutanoate(in) + H(+)(in). Its activity is regulated as follows. Transport activity exhibits steep dependence on substrate concentration. Substrate concentration sensitivity of SLC16A7 arises from the strong inter-subunit cooperativity of the SLC16A7 dimer during transport. Inhibited by AR-C155858. Functionally, proton-coupled monocarboxylate symporter. Catalyzes the rapid transport across the plasma membrane of monocarboxylates such as L-lactate, pyruvate and ketone bodies, acetoacetate, beta-hydroxybutyrate and acetate. Dimerization is functionally required and both subunits work cooperatively in transporting substrate. In Rattus norvegicus (Rat), this protein is Monocarboxylate transporter 2 (Slc16a7).